The chain runs to 931 residues: Phosphoenolpyruvate carboxylase (931 aa).

Residues H138 and K594 contribute to the active site.

The protein belongs to the PEPCase type 1 family. Mg(2+) is required as a cofactor.

It catalyses the reaction oxaloacetate + phosphate = phosphoenolpyruvate + hydrogencarbonate. Its function is as follows. Forms oxaloacetate, a four-carbon dicarboxylic acid source for the tricarboxylic acid cycle. This Streptococcus agalactiae serotype Ia (strain ATCC 27591 / A909 / CDC SS700) protein is Phosphoenolpyruvate carboxylase.